Consider the following 152-residue polypeptide: Probable flagellum biosynthesis repressor protein FlbT (152 aa).

Belongs to the FlbT family.

Has a post-transcriptional repressor function in flagellum biogenesis. Associates with the 5'-UTR of fljK mRNA and promotes its degradation. The chain is Probable flagellum biosynthesis repressor protein FlbT from Brucella abortus (strain S19).